The chain runs to 267 residues: Tryptophan synthase alpha chain (267 aa).

Catalysis depends on proton acceptor residues Glu49 and Asp60.

It belongs to the TrpA family. In terms of assembly, tetramer of two alpha and two beta chains.

The enzyme catalyses (1S,2R)-1-C-(indol-3-yl)glycerol 3-phosphate + L-serine = D-glyceraldehyde 3-phosphate + L-tryptophan + H2O. It functions in the pathway amino-acid biosynthesis; L-tryptophan biosynthesis; L-tryptophan from chorismate: step 5/5. The alpha subunit is responsible for the aldol cleavage of indoleglycerol phosphate to indole and glyceraldehyde 3-phosphate. This chain is Tryptophan synthase alpha chain, found in Citrifermentans bemidjiense (strain ATCC BAA-1014 / DSM 16622 / JCM 12645 / Bem) (Geobacter bemidjiensis).